Reading from the N-terminus, the 172-residue chain is Putative phosphoesterase BT9727_1129 (172 aa).

Residue His34 is the Proton donor of the active site. 2 consecutive short sequence motifs (HXTX) follow at residues 34 to 37 (HITL) and 115 to 118 (HLTI). The active-site Proton acceptor is the His115.

This sequence belongs to the 2H phosphoesterase superfamily. YjcG family.

The protein is Putative phosphoesterase BT9727_1129 of Bacillus thuringiensis subsp. konkukian (strain 97-27).